A 137-amino-acid chain; its full sequence is L-ectoine synthase (137 aa).

The segment at 115–137 is disordered; it reads EVHDESGAYPADPELAREPVAAD.

This sequence belongs to the ectoine synthase family.

It carries out the reaction (2S)-4-acetamido-2-aminobutanoate = L-ectoine + H2O. It functions in the pathway amine and polyamine biosynthesis; ectoine biosynthesis; L-ectoine from L-aspartate 4-semialdehyde: step 3/3. In terms of biological role, catalyzes the circularization of gamma-N-acetyl-alpha,gamma-diaminobutyric acid (ADABA) to ectoine (1,4,5,6-tetrahydro-2-methyl-4-pyrimidine carboxylic acid), which is an excellent osmoprotectant. The protein is L-ectoine synthase of Sphingopyxis alaskensis (strain DSM 13593 / LMG 18877 / RB2256) (Sphingomonas alaskensis).